The primary structure comprises 139 residues: ATP synthase epsilon chain (139 aa).

The protein belongs to the ATPase epsilon chain family. As to quaternary structure, F-type ATPases have 2 components, CF(1) - the catalytic core - and CF(0) - the membrane proton channel. CF(1) has five subunits: alpha(3), beta(3), gamma(1), delta(1), epsilon(1). CF(0) has three main subunits: a, b and c.

It localises to the cell membrane. Produces ATP from ADP in the presence of a proton gradient across the membrane. The polypeptide is ATP synthase epsilon chain (Ligilactobacillus salivarius (strain UCC118) (Lactobacillus salivarius)).